The primary structure comprises 95 residues: Phosphoribosyl-ATP pyrophosphatase (95 aa).

The protein belongs to the PRA-PH family.

Its subcellular location is the cytoplasm. The catalysed reaction is 1-(5-phospho-beta-D-ribosyl)-ATP + H2O = 1-(5-phospho-beta-D-ribosyl)-5'-AMP + diphosphate + H(+). It participates in amino-acid biosynthesis; L-histidine biosynthesis; L-histidine from 5-phospho-alpha-D-ribose 1-diphosphate: step 2/9. The protein is Phosphoribosyl-ATP pyrophosphatase of Sulfolobus acidocaldarius (strain ATCC 33909 / DSM 639 / JCM 8929 / NBRC 15157 / NCIMB 11770).